Reading from the N-terminus, the 85-residue chain is Beta-mammal/insect toxin Lqhb1 (85 aa).

The N-terminal stretch at Met-1–Thr-19 is a signal peptide. An LCN-type CS-alpha/beta domain is found at Asp-20–Asn-82. Cystine bridges form between Cys-31–Cys-81, Cys-35–Cys-56, Cys-42–Cys-63, and Cys-46–Cys-65.

It belongs to the long (4 C-C) scorpion toxin superfamily. Sodium channel inhibitor family. In terms of tissue distribution, expressed by the venom gland.

The protein resides in the secreted. Functionally, beta toxins bind voltage-independently at site-4 of sodium channels (Nav) and shift the voltage of activation toward more negative potentials thereby affecting sodium channel activation and promoting spontaneous and repetitive firing. Competes, with apparent high affinity, with anti-insect and anti-mammalian beta-toxins for binding to cockroach and rat brain synaptosomes, respectively. Also competes with an anti-mammalian alpha-toxin on binding to rat brain sodium channels. Has a weak effect on cardiac sodium channels and a marked effect on rat brain and skeletal muscle sodium channels. The sequence is that of Beta-mammal/insect toxin Lqhb1 from Leiurus hebraeus (Hebrew deathstalker scorpion).